A 530-amino-acid polypeptide reads, in one-letter code: GMP synthase [glutamine-hydrolyzing] (530 aa).

The region spanning 18–207 is the Glutamine amidotransferase type-1 domain; sequence TILVLDFGSQ…AVDICQAKTN (190 aa). Cys94 serves as the catalytic Nucleophile. Residues His181 and Glu183 contribute to the active site. In terms of domain architecture, GMPS ATP-PPase spans 208-405; sequence WSMENFIDTE…LGVPEDLVWR (198 aa). 236 to 242 contacts ATP; sequence SGGVDST. XMP contacts are provided by Arg309, Asp467, Lys522, and Glu528.

In terms of assembly, homodimer. It depends on Mg(2+) as a cofactor.

The protein resides in the cytoplasm. Its subcellular location is the cytosol. It catalyses the reaction XMP + L-glutamine + ATP + H2O = GMP + L-glutamate + AMP + diphosphate + 2 H(+). The protein operates within purine metabolism; GMP biosynthesis; GMP from XMP (L-Gln route): step 1/1. In terms of biological role, catalyzes the conversion of xanthine monophosphate (XMP) to GMP in the presence of glutamine and ATP through an adenyl-XMP intermediate. The chain is GMP synthase [glutamine-hydrolyzing] (GUA1) from Candida albicans (strain SC5314 / ATCC MYA-2876) (Yeast).